We begin with the raw amino-acid sequence, 363 residues long: Chorismate synthase (363 aa).

R47 lines the NADP(+) pocket. FMN contacts are provided by residues 124–126, G285, 300–304, and R326; these read RSS and KPTAT.

This sequence belongs to the chorismate synthase family. In terms of assembly, homotetramer. Requires FMNH2 as cofactor.

The enzyme catalyses 5-O-(1-carboxyvinyl)-3-phosphoshikimate = chorismate + phosphate. It participates in metabolic intermediate biosynthesis; chorismate biosynthesis; chorismate from D-erythrose 4-phosphate and phosphoenolpyruvate: step 7/7. In terms of biological role, catalyzes the anti-1,4-elimination of the C-3 phosphate and the C-6 proR hydrogen from 5-enolpyruvylshikimate-3-phosphate (EPSP) to yield chorismate, which is the branch point compound that serves as the starting substrate for the three terminal pathways of aromatic amino acid biosynthesis. This reaction introduces a second double bond into the aromatic ring system. This is Chorismate synthase from Opitutus terrae (strain DSM 11246 / JCM 15787 / PB90-1).